Here is a 379-residue protein sequence, read N- to C-terminus: Putative 2-hydroxyacid dehydrogenase YGL185C (379 aa).

NAD(+)-binding positions include 207–208 (SI), 291–293 (LGR), and aspartate 317. Arginine 293 is an active-site residue. The active site involves glutamate 322. Histidine 341 functions as the Proton donor in the catalytic mechanism. 341–344 (HLGS) provides a ligand contact to NAD(+).

The protein belongs to the D-isomer specific 2-hydroxyacid dehydrogenase family.

The chain is Putative 2-hydroxyacid dehydrogenase YGL185C from Saccharomyces cerevisiae (strain ATCC 204508 / S288c) (Baker's yeast).